The following is a 343-amino-acid chain: Glycerol-3-phosphate dehydrogenase [NAD(P)+] (343 aa).

NADPH is bound by residues S11, W12, H32, R33, and K106. Sn-glycerol 3-phosphate-binding residues include K106, G136, and S138. Residue A140 coordinates NADPH. K192, D245, S255, R256, and N257 together coordinate sn-glycerol 3-phosphate. Catalysis depends on K192, which acts as the Proton acceptor. R256 lines the NADPH pocket. NADPH contacts are provided by V280 and E282.

This sequence belongs to the NAD-dependent glycerol-3-phosphate dehydrogenase family.

It localises to the cytoplasm. The catalysed reaction is sn-glycerol 3-phosphate + NAD(+) = dihydroxyacetone phosphate + NADH + H(+). The enzyme catalyses sn-glycerol 3-phosphate + NADP(+) = dihydroxyacetone phosphate + NADPH + H(+). The protein operates within membrane lipid metabolism; glycerophospholipid metabolism. In terms of biological role, catalyzes the reduction of the glycolytic intermediate dihydroxyacetone phosphate (DHAP) to sn-glycerol 3-phosphate (G3P), the key precursor for phospholipid synthesis. The sequence is that of Glycerol-3-phosphate dehydrogenase [NAD(P)+] from Geobacillus thermodenitrificans (strain NG80-2).